The sequence spans 410 residues: Metacaspase-1 (410 aa).

Residues 1–94 (MFPGSGRQTY…RQSGAMNDVS (94 aa)) form a disordered region. Low complexity-rich tracts occupy residues 21-47 (APQY…YNGP) and 55-64 (NYNYGHYGPP). The span at 65–75 (QGQGQGYGQGG) shows a compositional bias: gly residues. Residues 80 to 94 (MYNNNRQSGAMNDVS) show a composition bias toward polar residues. Residues His200 and Cys256 contribute to the active site.

This sequence belongs to the peptidase C14B family.

Functionally, involved in cell death (apoptosis). This Meyerozyma guilliermondii (strain ATCC 6260 / CBS 566 / DSM 6381 / JCM 1539 / NBRC 10279 / NRRL Y-324) (Yeast) protein is Metacaspase-1 (MCA1).